The sequence spans 1403 residues: Baculoviral IAP repeat-containing protein 1f (1403 aa).

BIR repeat units follow at residues 60 to 127 (EAKR…CEFL), 159 to 227 (EEAR…CEFL), and 278 to 345 (EELR…CVFL). The Zn(2+) site is built by Cys315, Cys318, His335, and Cys342. In terms of domain architecture, NACHT spans 464–759 (SVMCVEGEAG…EFLAAVRLTE (296 aa)). 473 to 478 (GSGKTT) contributes to the ATP binding site.

As to quaternary structure, component of the NLRC4 inflammasome, at least composed of NLRC4, caspase-1 (CASP1) and some NAIP protein. In terms of assembly, (Microbial infection) Interacts with S.typhimurium (Salmonella) flagellin.

In terms of biological role, sensor component of the NLRC4 inflammasome that specifically recognizes and binds flagellin from pathogenic bacteria. Association of pathogenic bacteria proteins drives in turn drive assembly and activation of the NLRC4 inflammasome, promoting caspase-1 activation, cytokine production and macrophage pyroptosis. The NLRC4 inflammasome is activated as part of the innate immune response to a range of intracellular bacteria. The NLRC4 inflammasome senses Gram-negative bacteria such as L.pneumophila and P.aeruginosa, enteric pathogens S.typhimurium (Salmonella) and S.flexneri. May contribute to prevent motor-neuron apoptosis induced by a variety of signals. This chain is Baculoviral IAP repeat-containing protein 1f (Naip6), found in Mus musculus (Mouse).